We begin with the raw amino-acid sequence, 501 residues long: ATP synthase subunit alpha (501 aa).

169–176 provides a ligand contact to ATP; sequence GDRQTGKT.

Belongs to the ATPase alpha/beta chains family. In terms of assembly, F-type ATPases have 2 components, CF(1) - the catalytic core - and CF(0) - the membrane proton channel. CF(1) has five subunits: alpha(3), beta(3), gamma(1), delta(1), epsilon(1). CF(0) has three main subunits: a(1), b(2) and c(9-12). The alpha and beta chains form an alternating ring which encloses part of the gamma chain. CF(1) is attached to CF(0) by a central stalk formed by the gamma and epsilon chains, while a peripheral stalk is formed by the delta and b chains.

It localises to the cell membrane. It carries out the reaction ATP + H2O + 4 H(+)(in) = ADP + phosphate + 5 H(+)(out). Its function is as follows. Produces ATP from ADP in the presence of a proton gradient across the membrane. The alpha chain is a regulatory subunit. The polypeptide is ATP synthase subunit alpha (Streptococcus pneumoniae serotype 19F (strain G54)).